Reading from the N-terminus, the 884-residue chain is Formin-like protein 11 (884 aa).

Positions Met-1–Cys-18 are cleaved as a signal peptide. The segment at Ala-89–Glu-143 is disordered. Composition is skewed to pro residues over residues Trp-97–Asn-107 and Ala-115–Pro-126. The chain crosses the membrane as a helical span at residues Ile-158–Gly-178. 3 disordered regions span residues Ser-307–Lys-384, Ser-416–Pro-469, and Met-512–Leu-532. A compositionally biased stretch (low complexity) spans Ser-329 to Ser-343. The span at Phe-346–Arg-358 shows a compositional bias: basic and acidic residues. Pro residues-rich tracts occupy residues Ala-367 to Pro-379 and Gln-425 to Gln-436. The FH2 domain occupies Leu-461–Arg-884.

It belongs to the formin-like family. Class-I subfamily.

The protein localises to the membrane. In terms of biological role, might be involved in the organization and polarity of the actin cytoskeleton. The protein is Formin-like protein 11 (FH11) of Arabidopsis thaliana (Mouse-ear cress).